The chain runs to 845 residues: IVELQFEKEKVSLKLEEEIQENKDLIKENNATRHLCNLLKETSARSAEKTNKYEYEREETRQVYVDLNNNIEKMILAFEELRVQAENARLDMHFKLKEDHEKIQHLQEEYKKEVNDKENQVSLLLIQRTEKENKMKDLTFLLEESRDKVNQLEDKTKLQDENVKELNKKKDHLTSELEDTKMSLQRSMNTQKALEEDLQIATKTIYQLTEEKEAQMEEFNKAKTDHSFMVTELKATTCTLEELLRTEQQRLVKNEDQLKILTMELQKKSNELDEMTKFKNNNEVKLEELKKILAEDQKLLDEKKQVEKLAEELQGKEQELTLLLQTREKEVHDLEEQLLVTKISDQNYSKQVEELKTKLEEEKLKNAELTASCGKLSLENNKLTQETNDMALELKKYQEDITNSKKQEERMLKQIENLEEKETHLRDELESVRKEFIQQGNEVKCKLDKSEENARSIECEVLKKEKQMKILENKCNNLRKQAENKSKYIEELHQENKALKKKSSAESKQLNAYEIKVNKLQLELESAKQKFQEMTDNYQKEIEVKKISEEKLLGEVEKAKAMVDEAVKLQKEIDLRCQHKIAEMVALMEKHKHQYDKIVEERDSELGLCKNREQEQLSVKTALETELSNIRNELVSLKKQLEIEREEKEKLKLEKENTAILKDKKDKKIQTSLLESAETTCQKFDSKTTPSQNISRISSSMESGKTKDNRDCLRTSAKILSTAFVKEYTVKTPTKMQMYQRENKYIPTGRSNKKRKTVFEFDVNSDSSETTDLLSMVSEEEISNRLYNNNSPNSHLTPKQTPLSLSTPESFVSLGGVRKMREDRWATIAKTDRKRRLKEAEKLFA.

Residues 59–215 (ETRQVYVDLN…YQLTEEKEAQ (157 aa)) form an interaction with SYCE3 region. 2 coiled-coil regions span residues 64–211 (YVDL…LTEE) and 244–544 (LRTE…EIEV). Residues 550–644 (EKLLGEVEKA…VSLKKQLEIE (95 aa)) form a required for pH-induced assembly of C-terminal ends into antiparallel tetramers region. A Nuclear localization signal motif is present at residues 553 to 556 (LGEV). Residues 620–663 (KTALETELSNIRNELVSLKKQLEIEREEKEKLKLEKENTAILKD) are a coiled coil. Residues 657–845 (NTAILKDKKD…RLKEAEKLFA (189 aa)) are DNA-binding. At S676 the chain carries Phosphoserine. Residues 684–703 (FDSKTTPSQNISRISSSMES) show a composition bias toward polar residues. Residues 684-709 (FDSKTTPSQNISRISSSMESGKTKDN) are disordered. The Nuclear localization signal signature appears at 753–756 (KKRK). The segment at 786–808 (LYNNNSPNSHLTPKQTPLSLSTP) is disordered.

In terms of assembly, structural component of synaptonemal complexes. Homotetramer that consists of an N-terminal four-helical bundle that bifurcates into two elongated C-terminal dimeric coiled coils. This tetrameric building block potentially self-assembles into a supramolecular zipper-like lattice to mediate meiotic chromosome synapsis. Self-assembly is likely initiated by local proton density at chromosome axis, which is predicted to trigger antiparallel back to back assembly of adjacent C-terminal ends into tetrameric structures that anchor to chromosomal DNA. Then the N-terminal ends are predicted to undergo cooperative antiparallel head to head assembly at the midline of synaptonemal complexes central element to form a zipper-like lattice between properly aligned homologous chromosomes. The nascent synapsis generated by SYCP1 is stabilized through interaction with central element proteins SYCE1 and SYCE2. Interacts (via tetrameric core) with SYCE3; the interaction remodels SYCP1 homotetramers to 2:1 heterotrimers with SYCE3. SYCP1/SYCE3 heterotrimers form lattice assemblies as part of the mature synaptonemal complex via both lateral and head-to-head interactions. Forms a complex with EWSR1, PRDM9, SYCP3 and REC8; complex formation is dependent of phosphorylated form of REC8 and requires PRDM9 bound to hotspot DNA; EWSR1 joins PRDM9 with the chromosomal axis through REC8. Interacts with SPO16.

It is found in the nucleus. Its subcellular location is the chromosome. The protein localises to the centromere. Major component of the transverse filaments of synaptonemal complexes, formed between homologous chromosomes during meiotic prophase. Required for normal assembly of the central element of the synaptonemal complexes. Required for normal centromere pairing during meiosis. Required for normal meiotic chromosome synapsis during oocyte and spermatocyte development and for normal male and female fertility. In Mesocricetus auratus (Golden hamster), this protein is Synaptonemal complex protein 1.